The sequence spans 216 residues: Putative flagellar filament outer layer-like protein (216 aa).

A disordered region spans residues 1–22 (MFAQDAAQTGEQTTQNQGENGN). The span at 8–22 (QTGEQTTQNQGENGN) shows a compositional bias: low complexity.

It is found in the periplasmic flagellum. Its subcellular location is the periplasm. Functionally, might be part of the flagella. The protein is Putative flagellar filament outer layer-like protein (flaAL) of Brachyspira hyodysenteriae (strain ATCC 49526 / WA1).